Consider the following 126-residue polypeptide: Small ribosomal subunit protein uS12 (126 aa).

The tract at residues 1-23 is disordered; the sequence is MPTISQLVRKGRKTVASKSTAPA. At Asp-89 the chain carries 3-methylthioaspartic acid.

Belongs to the universal ribosomal protein uS12 family. In terms of assembly, part of the 30S ribosomal subunit. Contacts proteins S8 and S17. May interact with IF1 in the 30S initiation complex.

Its function is as follows. With S4 and S5 plays an important role in translational accuracy. In terms of biological role, interacts with and stabilizes bases of the 16S rRNA that are involved in tRNA selection in the A site and with the mRNA backbone. Located at the interface of the 30S and 50S subunits, it traverses the body of the 30S subunit contacting proteins on the other side and probably holding the rRNA structure together. The combined cluster of proteins S8, S12 and S17 appears to hold together the shoulder and platform of the 30S subunit. This chain is Small ribosomal subunit protein uS12, found in Clostridium perfringens (strain ATCC 13124 / DSM 756 / JCM 1290 / NCIMB 6125 / NCTC 8237 / Type A).